Here is a 55-residue protein sequence, read N- to C-terminus: Neurotoxin B-II (55 aa).

At Pro10 the chain carries Hydroxyproline. Disulfide bonds link Cys12-Cys48, Cys16-Cys52, Cys23-Cys41, and Cys26-Cys37.

Belongs to the worm B-toxin family.

It is found in the secreted. Its function is as follows. This toxin increases the excitability of nerves by delaying the inactivation of the voltage-gated sodium channel (Nav). Only acts on some crustacean. Neurotoxin B-II is less abundant, but 15-fold more toxic than neurotoxin B-VI. This chain is Neurotoxin B-II, found in Cerebratulus lacteus (Milky ribbon worm).